A 337-amino-acid polypeptide reads, in one-letter code: Eukaryotic translation initiation factor 3 subunit H (337 aa).

One can recognise an MPN domain in the interval 21 to 153; it reads VQCDGLAVMK…LKAYRLTPQA (133 aa).

Belongs to the eIF-3 subunit H family. Component of the eukaryotic translation initiation factor 3 (eIF-3) complex. The eIF-3 complex interacts with pix. Interacts with mxt.

The protein resides in the cytoplasm. Functionally, component of the eukaryotic translation initiation factor 3 (eIF-3) complex, which is involved in protein synthesis of a specialized repertoire of mRNAs and, together with other initiation factors, stimulates binding of mRNA and methionyl-tRNAi to the 40S ribosome. The eIF-3 complex specifically targets and initiates translation of a subset of mRNAs involved in cell proliferation. The polypeptide is Eukaryotic translation initiation factor 3 subunit H (Drosophila willistoni (Fruit fly)).